A 401-amino-acid chain; its full sequence is Calreticulin (401 aa).

A signal peptide spans 1–18; it reads MRKELWLGLLLSSQAVLS. A disulfide bond links C103 and C134. The an alpha-D-glucoside site is built by Y107, K109, Y125, and D132. 7 tandem repeats follow at residues 187–198, 206–217, 223–234, 241–252, 256–266, 270–280, and 284–294. Positions 187 to 252 are 4 X approximate repeats; it reads KESGTLEEDW…DATQPDDWDE (66 aa). 2 stretches are compositionally biased toward basic and acidic residues: residues 199–214 and 224–236; these read LKPK…KPAD and PEDK…DKEP. The segment at 199 to 263 is disordered; the sequence is LKPKTIPDPE…EDGKWEAPMI (65 aa). A compositionally biased stretch (acidic residues) spans 246 to 256; it reads QPDDWDEEEDG. Residues 256–294 form a 3 X approximate repeats region; it reads GKWEAPMISNPKYKGEWKAKKIPNPAYKGVWKPRDIPNP. Residue D314 coordinates an alpha-D-glucoside. A disordered region spans residues 341-401; that stretch reads DQTNGATKDA…EEEDDKKDEL (61 aa). A compositionally biased stretch (basic and acidic residues) spans 348-381; that stretch reads KDAEKKAFDSAEADKRKKEEDERKKQEEEEKKTA. The span at 382 to 401 shows a compositional bias: acidic residues; the sequence is EEDEDDDDEEEEEDDKKDEL. The Prevents secretion from ER signature appears at 398–401; it reads KDEL.

It belongs to the calreticulin family.

The protein localises to the endoplasmic reticulum lumen. Molecular calcium-binding chaperone promoting folding, oligomeric assembly and quality control in the ER via the calreticulin/calnexin cycle. This lectin may interact transiently with almost all of the monoglucosylated glycoproteins that are synthesized in the ER. This Euglena gracilis protein is Calreticulin.